Here is a 522-residue protein sequence, read N- to C-terminus: 5,6-dihydroxyindole-2-carboxylic acid oxidase (522 aa).

Positions 1 to 21 are cleaved as a signal peptide; it reads MLRTSCGGMLLLVHALGLVRA. At 22–470 the chain is on the lumenal, melanosome side; that stretch reads QFPRACVTPE…RPLTPTQIVT (449 aa). 5 disulfide bridges follow: Cys-27-Cys-38, Cys-39-Cys-59, Cys-50-Cys-89, Cys-91-Cys-100, and Cys-103-Cys-112. Residues Asn-164 and Asn-171 are each glycosylated (N-linked (GlcNAc...) asparagine). His-182, His-205, and His-214 together coordinate Zn(2+). Intrachain disulfides connect Cys-248–Cys-251 and Cys-280–Cys-293. Asn-294 carries an N-linked (GlcNAc...) asparagine glycan. Zn(2+) contacts are provided by His-367 and His-371. Asn-375 carries an N-linked (GlcNAc...) asparagine glycan. His-394 is a Zn(2+) binding site. Residues 471–491 form a helical membrane-spanning segment; sequence VAVVAALLLVAIIFAASTCVV. The Cytoplasmic segment spans residues 492-522; sequence HLRGNRTEGRQPLLGDQYQRYEDHNKTQSVV.

Belongs to the tyrosinase family. Cu(2+) is required as a cofactor. Requires Zn(2+) as cofactor.

It is found in the melanosome membrane. It catalyses the reaction 2 5,6-dihydroxyindole-2-carboxylate + O2 = 2 indole-5,6-quinone-2-carboxylate + 2 H2O. Its pathway is pigment biosynthesis; melanin biosynthesis. Functionally, plays a role in melanin biosynthesis. Catalyzes the oxidation of 5,6-dihydroxyindole-2-carboxylic acid (DHICA) into indole-5,6-quinone-2-carboxylic acid. May regulate or influence the type of melanin synthesized. Also to a lower extent, capable of hydroxylating tyrosine and producing melanin. This Carassius auratus (Goldfish) protein is 5,6-dihydroxyindole-2-carboxylic acid oxidase (tyrp1).